The sequence spans 345 residues: Ryncolin-4 (345 aa).

Positions 1–19 are cleaved as a signal peptide; the sequence is MKPWAAFHLIFLVASSLEG. Residues 48-118 are disordered; sequence ILQSQPGIPG…DKGDKGEDCN (71 aa). One can recognise a Collagen-like domain in the interval 57 to 114; sequence GIPGVPGTNGSEGLKGDPGPQGPPGIRGPDGIRGEAGPKGDKGDQGDKGDKGDKGDKG. Residues 86–116 are compositionally biased toward basic and acidic residues; it reads DGIRGEAGPKGDKGDQGDKGDKGDKGDKGED. Residues 121–339 form the Fibrinogen C-terminal domain; it reads DCLPTEVRNC…YADMKIRPQK (219 aa). Disulfide bonds link Cys-130–Cys-158 and Cys-282–Cys-295.

Belongs to the ficolin lectin family. Veficolin subfamily. In terms of processing, hydroxylated, possibly at Pro-80. Expressed by the venom duct.

The protein localises to the secreted. In terms of biological role, initiates complement activation and/or interferes in platelet aggregation and/or blood coagulation. In Cerberus rynchops (Dog-faced water snake), this protein is Ryncolin-4.